Consider the following 229-residue polypeptide: Cytochrome c oxidase assembly factor 7 (229 aa).

Sel1-like repeat units lie at residues Pro-34–Ala-66, Ala-68–Gly-104, Val-108–Phe-145, Ala-146–His-182, and Val-183–Gly-218. Positions Asp-197–Glu-229 are disordered.

Belongs to the hcp beta-lactamase family.

It is found in the mitochondrion intermembrane space. In terms of biological role, may be required for assembly of mitochondrial respiratory chain complexes. This chain is Cytochrome c oxidase assembly factor 7 (coa7), found in Danio rerio (Zebrafish).